Consider the following 856-residue polypeptide: Protein phosphatase 2C 32 (856 aa).

3 positions are modified to phosphoserine: S152, S189, and S201. One can recognise a PPM-type phosphatase domain in the interval 269–835 (ESCLESNRNL…DDVSVMVVSL (567 aa)). D307 and G308 together coordinate Mn(2+). 3 disordered regions span residues 340–373 (PSED…KSVV), 388–407 (GNTD…GPGK), and 446–485 (NPST…QISS). Over residues 395–407 (ADGPPGDSAGPGK) the composition is skewed to low complexity. Residues 471-485 (NSGQRHGTKKSQISS) are compositionally biased toward polar residues. 2 residues coordinate Mn(2+): D763 and D826.

Belongs to the PP2C family. Mg(2+) serves as cofactor. The cofactor is Mn(2+). As to expression, expressed in roots, leaves, stems, inflorescences, flowers and throughout the shoot meristem.

It localises to the nucleus. It carries out the reaction O-phospho-L-seryl-[protein] + H2O = L-seryl-[protein] + phosphate. It catalyses the reaction O-phospho-L-threonyl-[protein] + H2O = L-threonyl-[protein] + phosphate. Its activity is regulated as follows. Insensitive to okadaic acid. Its function is as follows. Involved in the regulation of pedicel length and of CLAVATA pathways controlling stem cell identity at shoot and flower meristems. This Arabidopsis thaliana (Mouse-ear cress) protein is Protein phosphatase 2C 32 (POL).